A 352-amino-acid chain; its full sequence is Protein-glutamate methylesterase/protein-glutamine glutaminase 2 (352 aa).

Positions 1 to 116 (MVVDDSAVVR…KQFLTDSADE (116 aa)) constitute a Response regulatory domain. D50 bears the 4-aspartylphosphate mark. Positions 162-352 (AQTTERIVAI…MAREIVTQLQ (191 aa)) constitute a CheB-type methylesterase domain. Active-site residues include S174, H200, and D296.

Belongs to the CheB family. Phosphorylated by CheA. Phosphorylation of the N-terminal regulatory domain activates the methylesterase activity.

It is found in the cytoplasm. The catalysed reaction is [protein]-L-glutamate 5-O-methyl ester + H2O = L-glutamyl-[protein] + methanol + H(+). It catalyses the reaction L-glutaminyl-[protein] + H2O = L-glutamyl-[protein] + NH4(+). In terms of biological role, involved in chemotaxis. Part of a chemotaxis signal transduction system that modulates chemotaxis in response to various stimuli. Catalyzes the demethylation of specific methylglutamate residues introduced into the chemoreceptors (methyl-accepting chemotaxis proteins or MCP) by CheR. Also mediates the irreversible deamidation of specific glutamine residues to glutamic acid. This is Protein-glutamate methylesterase/protein-glutamine glutaminase 2 from Xanthomonas axonopodis pv. citri (strain 306).